The chain runs to 339 residues: Methylglutaconyl-CoA hydratase, mitochondrial (339 aa).

Residues 1-67 (MAAAVAAAPG…AGGPAPKRGY (67 aa)) constitute a mitochondrion transit peptide. K100 carries the N6-acetyllysine; alternate modification. The residue at position 100 (K100) is an N6-succinyllysine; alternate. The segment at 105–119 (KNLIKMLSKAVDALK) is RNA-binding. K109 is modified (N6-succinyllysine). Residues K113 and K144 each carry the N6-acetyllysine; alternate modification. N6-succinyllysine; alternate is present on residues K113 and K144. N6-succinyllysine is present on residues K148 and K160. An N6-acetyllysine; alternate mark is found at K204 and K211. K204 and K211 each carry N6-succinyllysine; alternate. An N6-succinyllysine modification is found at K329.

Belongs to the enoyl-CoA hydratase/isomerase family. In terms of assembly, homohexamer.

It localises to the mitochondrion. It catalyses the reaction (3S)-3-hydroxy-3-methylglutaryl-CoA = 3-methyl-(2E)-glutaconyl-CoA + H2O. The catalysed reaction is (3S)-citramalyl-CoA = itaconyl-CoA + H2O. The enzyme catalyses 3-hydroxyisovaleryl-CoA = 3-methylbut-2-enoyl-CoA + H2O. It carries out the reaction (S)-3-hydroxyglutaryl-CoA = (2E)-glutaconyl-CoA + H2O. Its pathway is amino-acid degradation; L-leucine degradation; (S)-3-hydroxy-3-methylglutaryl-CoA from 3-isovaleryl-CoA: step 3/3. Its function is as follows. Catalyzes the fifth step in the leucine degradation pathway, the reversible hydration of 3-methylglutaconyl-CoA (3-MG-CoA) to 3-hydroxy-3-methylglutaryl-CoA (HMG-CoA). Can catalyze the reverse reaction but at a much lower rate in vitro. HMG-CoA is then quickly degraded by another enzyme (such as HMG-CoA lyase) to give acetyl-CoA and acetoacetate. Uses other substrates such as (2E)-glutaconyl-CoA efficiently in vitro, and to a lesser extent 3-methylcrotonyl-CoA (3-methyl-(2E)-butenoyl-CoA), crotonyl-CoA ((2E)-butenoyl-CoA) and 3-hydroxybutanoyl-CoA (the missing carboxylate reduces affinity to the active site). Originally it was identified as an RNA-binding protein as it binds to AU-rich elements (AREs) in vitro. AREs direct rapid RNA degradation and mRNA deadenylation. Might have itaconyl-CoA hydratase activity, converting itaconyl-CoA into citramalyl-CoA in the C5-dicarboxylate catabolism pathway. The C5-dicarboxylate catabolism pathway is required to detoxify itaconate, an antimicrobial metabolite and immunomodulator produced by macrophages during certain infections, that can act as a vitamin B12-poisoning metabolite. The protein is Methylglutaconyl-CoA hydratase, mitochondrial (AUH) of Homo sapiens (Human).